A 266-amino-acid polypeptide reads, in one-letter code: NAD-capped RNA hydrolase NudC (266 aa).

Arg-74 contacts substrate. The Zn(2+) site is built by Cys-103, Cys-106, Cys-121, and Cys-124. Position 129 (Tyr-129) interacts with substrate. Residues 130 to 253 (PRVSPCIIVA…TIARVLIDET (124 aa)) form the Nudix hydrolase domain. The a divalent metal cation site is built by Ala-163, Glu-179, and Glu-183. The Nudix box signature appears at 164 to 185 (GFVEAGETLEQCVAREVEEETG). Substrate is bound at residue 197–204 (QPWAFPSN). Position 224 (Glu-224) interacts with a divalent metal cation. Position 246 (Ala-246) interacts with substrate.

It belongs to the Nudix hydrolase family. NudC subfamily. In terms of assembly, homodimer. It depends on Mg(2+) as a cofactor. Requires Mn(2+) as cofactor. The cofactor is Zn(2+).

The catalysed reaction is a 5'-end NAD(+)-phospho-ribonucleoside in mRNA + H2O = a 5'-end phospho-adenosine-phospho-ribonucleoside in mRNA + beta-nicotinamide D-ribonucleotide + 2 H(+). It catalyses the reaction NAD(+) + H2O = beta-nicotinamide D-ribonucleotide + AMP + 2 H(+). The enzyme catalyses NADH + H2O = reduced beta-nicotinamide D-ribonucleotide + AMP + 2 H(+). In terms of biological role, mRNA decapping enzyme that specifically removes the nicotinamide adenine dinucleotide (NAD) cap from a subset of mRNAs by hydrolyzing the diphosphate linkage to produce nicotinamide mononucleotide (NMN) and 5' monophosphate mRNA. The NAD-cap is present at the 5'-end of some mRNAs and stabilizes RNA against 5'-processing. Has preference for mRNAs with a 5'-end purine. Catalyzes the hydrolysis of a broad range of dinucleotide pyrophosphates. The protein is NAD-capped RNA hydrolase NudC of Photobacterium profundum (strain SS9).